The primary structure comprises 169 residues: Ubiquitin-fold modifier-conjugating enzyme 1 (169 aa).

The active-site Glycyl thioester intermediate is the Cys116.

Belongs to the ubiquitin-conjugating enzyme family. UFC1 subfamily.

E2-like enzyme which forms an intermediate with UFM1 via a thioester linkage. This Branchiostoma floridae (Florida lancelet) protein is Ubiquitin-fold modifier-conjugating enzyme 1.